We begin with the raw amino-acid sequence, 615 residues long: Delta-like protein B (615 aa).

Residues 1-20 form the signal peptide; sequence MAHLSLYCLLSVSLLQLVAS. The Extracellular segment spans residues 21–522; that stretch reads SGVFELKVHS…VGQTSPSAVA (502 aa). Residues 159–203 enclose the DSL domain; sequence VFCDEFYFGEACSDYCRPRDDTLGHYTCDENGNKECLVGWQGDYC. Intrachain disulfides connect Cys-161–Cys-170, Cys-174–Cys-186, Cys-194–Cys-203, Cys-208–Cys-219, Cys-212–Cys-225, Cys-227–Cys-236, Cys-245–Cys-250, Cys-258–Cys-267, Cys-274–Cys-286, Cys-280–Cys-296, Cys-298–Cys-307, Cys-314–Cys-325, Cys-319–Cys-334, Cys-336–Cys-345, Cys-352–Cys-363, Cys-357–Cys-373, Cys-375–Cys-384, Cys-391–Cys-402, Cys-396–Cys-411, Cys-413–Cys-422, Cys-429–Cys-440, Cys-434–Cys-449, Cys-451–Cys-460, Cys-467–Cys-478, Cys-472–Cys-487, and Cys-489–Cys-498. 3 EGF-like domains span residues 204-237, 241-268, and 270-308; these read SDPI…PSCS, HYPG…LFCN, and DLNY…TNCE. An EGF-like 4; calcium-binding domain is found at 310-346; sequence EINECDCNPCKNGGSCNDLENDYSCTCPQGFYGKNCE. 2 EGF-like domains span residues 348–385 and 387–423; these read IAMT…SNCE and RLDR…SRCE. The region spanning 425 to 461 is the EGF-like 7; calcium-binding domain; sequence NIDDCARYPCQNAGTCQDGINDYTCTCTLGFTGKNCS. Asn-459 carries an N-linked (GlcNAc...) asparagine glycan. One can recognise an EGF-like 8 domain in the interval 463–499; the sequence is RADACLTNPCLHGGTCFTHFSGPVCQCVPGFMGSTCE. A helical membrane pass occupies residues 523-543; that stretch reads VSCVLGVLAVFLGVCVGLVVL. At 544–615 the chain is on the cytoplasmic side; sequence RRRRHRLRRQ…FLWSAGGGLR (72 aa).

In terms of processing, ubiquitinated by mib, leading to its endocytosis and subsequent degradation.

It is found in the membrane. In terms of biological role, acts as a ligand for Notch receptors and is involved in primary neurogenesis. Can activate Notch receptors, thereby playing a key role in lateral inhibition, a process that prevents the immediate neighbors of each nascent neural cell from simultaneously embarking on neural differentiation. This chain is Delta-like protein B (dlb), found in Danio rerio (Zebrafish).